Consider the following 212-residue polypeptide: Methylthioribulose-1-phosphate dehydratase (212 aa).

Residues H97 and H99 each coordinate Zn(2+).

Belongs to the aldolase class II family. MtnB subfamily. In terms of assembly, homotetramer. The cofactor is Zn(2+).

It carries out the reaction 5-(methylsulfanyl)-D-ribulose 1-phosphate = 5-methylsulfanyl-2,3-dioxopentyl phosphate + H2O. Its pathway is amino-acid biosynthesis; L-methionine biosynthesis via salvage pathway; L-methionine from S-methyl-5-thio-alpha-D-ribose 1-phosphate: step 2/6. Its function is as follows. Catalyzes the dehydration of methylthioribulose-1-phosphate (MTRu-1-P) into 2,3-diketo-5-methylthiopentyl-1-phosphate (DK-MTP-1-P). The protein is Methylthioribulose-1-phosphate dehydratase of Bacillus thuringiensis (strain Al Hakam).